A 257-amino-acid chain; its full sequence is Imidazole glycerol phosphate synthase subunit HisF (257 aa).

Catalysis depends on residues Asp-11 and Asp-130.

It belongs to the HisA/HisF family. As to quaternary structure, heterodimer of HisH and HisF.

It is found in the cytoplasm. The enzyme catalyses 5-[(5-phospho-1-deoxy-D-ribulos-1-ylimino)methylamino]-1-(5-phospho-beta-D-ribosyl)imidazole-4-carboxamide + L-glutamine = D-erythro-1-(imidazol-4-yl)glycerol 3-phosphate + 5-amino-1-(5-phospho-beta-D-ribosyl)imidazole-4-carboxamide + L-glutamate + H(+). It participates in amino-acid biosynthesis; L-histidine biosynthesis; L-histidine from 5-phospho-alpha-D-ribose 1-diphosphate: step 5/9. In terms of biological role, IGPS catalyzes the conversion of PRFAR and glutamine to IGP, AICAR and glutamate. The HisF subunit catalyzes the cyclization activity that produces IGP and AICAR from PRFAR using the ammonia provided by the HisH subunit. This chain is Imidazole glycerol phosphate synthase subunit HisF, found in Shewanella halifaxensis (strain HAW-EB4).